We begin with the raw amino-acid sequence, 178 residues long: Sec-independent protein translocase protein TatB (178 aa).

A helical transmembrane segment spans residues methionine 1–glycine 21. The span at threonine 77–threonine 86 shows a compositional bias: polar residues. Positions threonine 77–serine 178 are disordered. Residues proline 93 to alanine 102 are compositionally biased toward basic and acidic residues. Over residues histidine 155–histidine 165 the composition is skewed to low complexity. The span at glutamate 166 to serine 178 shows a compositional bias: basic and acidic residues.

Belongs to the TatB family. As to quaternary structure, the Tat system comprises two distinct complexes: a TatABC complex, containing multiple copies of TatA, TatB and TatC subunits, and a separate TatA complex, containing only TatA subunits. Substrates initially bind to the TatABC complex, which probably triggers association of the separate TatA complex to form the active translocon.

Its subcellular location is the cell inner membrane. In terms of biological role, part of the twin-arginine translocation (Tat) system that transports large folded proteins containing a characteristic twin-arginine motif in their signal peptide across membranes. Together with TatC, TatB is part of a receptor directly interacting with Tat signal peptides. TatB may form an oligomeric binding site that transiently accommodates folded Tat precursor proteins before their translocation. The polypeptide is Sec-independent protein translocase protein TatB (Nitrobacter hamburgensis (strain DSM 10229 / NCIMB 13809 / X14)).